We begin with the raw amino-acid sequence, 364 residues long: MGKGGMSQGEGSKVEEENMAAWLVGINTLKIQPFLLPSVGPHDVRVRMKAVGICGSDVHYLKTMRCADFVVKEPMVIGHECAGIIEEVGEEVKHLVVGDRVALEPGISCWRCNLCREGRYNLCPEMKFFATPPVHGSLANQVVHPADLCFKLPENVSLEEGAMCEPLSVGVHACRRAEVGPETNVLVMGAGPIGLVTMLAARAFSVPRIVIVDVDENRLAVAKQLGADEIVQVTTNLEDVGSEVEQIQKAMGSNIDVTFDCAGFNKTMSTALAATRCGGKVCLVGMGHGIMTVPLTPAAAREVDVVGVFRYKNTWPLCLEFLTSGKIDVKPLITHRFGFSQKEVEDAFETSARGSNAIKVMFNL.

Cysteine 54 contacts Zn(2+). Tyrosine 60 contributes to the substrate binding site. Positions 79 and 80 each coordinate Zn(2+). Substrate is bound at residue glutamate 165. Residues isoleucine 193, aspartate 213, arginine 218, 284-286, and 308-310 contribute to the NAD(+) site; these read VGM and VFR. Substrate-binding residues include arginine 310 and tyrosine 311.

This sequence belongs to the zinc-containing alcohol dehydrogenase family. As to quaternary structure, homotetramer. Zn(2+) is required as a cofactor. In terms of tissue distribution, mostly expressed in dry seeds and leaves, and, to a lower extent, in roots, stems, flowers and siliques (at protein level).

The protein resides in the mitochondrion membrane. It localises to the cell membrane. Its subcellular location is the cytoplasm. It is found in the cytosol. It carries out the reaction keto-D-fructose + NADH + H(+) = D-sorbitol + NAD(+). The catalysed reaction is ribitol + NAD(+) = D-ribulose + NADH + H(+). It catalyses the reaction xylitol + NAD(+) = D-xylulose + NADH + H(+). Polyol dehydrogenase that catalyzes the NAD(+)-dependent oxidation of various sugar alcohols. Is mostly active with D-sorbitol (D-glucitol), ribitol and xylitol as substrates, leading to the C2-oxidized products D-fructose, D-ribulose and D-xylulose, respectively. To a lesser extent, can also oxidize arabitol, mannitol, lactitol and maltitol in vitro. Is required for sorbitol metabolism. Cannot use NADP(+) as the electron acceptor. The chain is Sorbitol dehydrogenase (SDH) from Arabidopsis thaliana (Mouse-ear cress).